The sequence spans 290 residues: 4-hydroxybenzoate octaprenyltransferase (290 aa).

Transmembrane regions (helical) follow at residues 24–44 (IGFFLLLWPTLWGLWLSHKGI), 48–68 (VVLIVFVAGALCMRSAGCIIN), 98–118 (LVALSILLFIAFILVLSLNFI), 142–162 (FPQVMLGLLFSWPILMAFTAI), 171–191 (WLLFLMNTVWTIVYDTQYAMI), 214–234 (FLIGILQLCIVFILGIIGWKE), 239–259 (VFYFFSLFGVIILFMWQQILI), and 270–290 (AFLSNNYVGMLVFIGIASSFH).

It belongs to the UbiA prenyltransferase family. Mg(2+) serves as cofactor.

The protein resides in the cell inner membrane. It catalyses the reaction all-trans-octaprenyl diphosphate + 4-hydroxybenzoate = 4-hydroxy-3-(all-trans-octaprenyl)benzoate + diphosphate. The protein operates within cofactor biosynthesis; ubiquinone biosynthesis. Catalyzes the prenylation of para-hydroxybenzoate (PHB) with an all-trans polyprenyl group. Mediates the second step in the final reaction sequence of ubiquinone-8 (UQ-8) biosynthesis, which is the condensation of the polyisoprenoid side chain with PHB, generating the first membrane-bound Q intermediate 3-octaprenyl-4-hydroxybenzoate. The protein is 4-hydroxybenzoate octaprenyltransferase of Blochmanniella pennsylvanica (strain BPEN).